Here is a 155-residue protein sequence, read N- to C-terminus: Mediator of RNA polymerase II transcription subunit 10 (155 aa).

The disordered stretch occupies residues 54 to 80 (SSHTQSHAPDADTAQANPSDPPISTIE).

This sequence belongs to the Mediator complex subunit 10 family. As to quaternary structure, component of the Mediator complex.

The protein localises to the nucleus. Functionally, component of the Mediator complex, a coactivator involved in the regulated transcription of nearly all RNA polymerase II-dependent genes. Mediator functions as a bridge to convey information from gene-specific regulatory proteins to the basal RNA polymerase II transcription machinery. Mediator is recruited to promoters by direct interactions with regulatory proteins and serves as a scaffold for the assembly of a functional preinitiation complex with RNA polymerase II and the general transcription factors. This Aspergillus terreus (strain NIH 2624 / FGSC A1156) protein is Mediator of RNA polymerase II transcription subunit 10 (nut2).